Consider the following 912-residue polypeptide: Cadherin-2 (912 aa).

Positions M1–I28 are cleaved as a signal peptide. The propeptide occupies K29–R164. Cadherin domains lie at D165–F272, L273–F387, T388–F502, V503–P609, and Q610–R720. Over D165–G729 the chain is Extracellular. Ca(2+) contacts are provided by E175, D231, E233, D264, M265, N266, D267, and N268. N278 carries N-linked (GlcNAc...) asparagine glycosylation. Ca(2+)-binding residues include D298, D300, and N306. N330 carries an N-linked (GlcNAc...) asparagine glycan. D358 provides a ligand contact to Ca(2+). N-linked (GlcNAc...) asparagine glycans are attached at residues N407, N578, N628, and N657. The chain crosses the membrane as a helical span at residues A730–M752. Residues K753–D912 lie on the Cytoplasmic side of the membrane. Low complexity predominate over residues S869–G886. Residues S869 to Y890 are disordered.

In terms of assembly, homodimer (via extracellular region). Can also form heterodimers with other cadherins (via extracellular region). Dimerization occurs in trans, i.e. with a cadherin chain from another cell. Interacts with CTNNA2. As to expression, expressed at intercalated disks in the heart (at protein level).

It is found in the cell membrane. The protein resides in the sarcolemma. The protein localises to the cell junction. It localises to the cell surface. Its subcellular location is the desmosome. It is found in the adherens junction. In terms of biological role, calcium-dependent cell adhesion protein; preferentially mediates homotypic cell-cell adhesion. Cadherins may thus contribute to the sorting of heterogeneous cell types, and thereby play an important role during embryonic development. Required for proper neurite branching, and pre- and postsynaptic organization. The sequence is that of Cadherin-2 (CDH2) from Gallus gallus (Chicken).